A 538-amino-acid chain; its full sequence is NAD(P)H-quinone oxidoreductase chain 4 (538 aa).

14 consecutive transmembrane segments (helical) span residues 11–31 (FPWL…VPFI), 43–63 (YALI…FKGF), 95–115 (MPLI…AWPV), 119–139 (PKLF…VFAV), 143–163 (LLFF…LAIW), 175–195 (FIIY…AMGF), 217–237 (GFQL…LPIV), 251–271 (TAPV…YALL), 285–305 (FAPL…LTSF), 314–334 (IAYS…SFSS), 340–360 (AMLQ…LVGA), 382–404 (IMFA…SGFI), 425–445 (IVVA…LLSM), and 472–492 (IYII…PKIM).

The protein belongs to the complex I subunit 4 family.

Its subcellular location is the cellular thylakoid membrane. It catalyses the reaction a plastoquinone + NADH + (n+1) H(+)(in) = a plastoquinol + NAD(+) + n H(+)(out). The catalysed reaction is a plastoquinone + NADPH + (n+1) H(+)(in) = a plastoquinol + NADP(+) + n H(+)(out). NDH-1 shuttles electrons from NAD(P)H, via FMN and iron-sulfur (Fe-S) centers, to quinones in the respiratory chain. The immediate electron acceptor for the enzyme in this species is believed to be plastoquinone. Couples the redox reaction to proton translocation (for every two electrons transferred, four hydrogen ions are translocated across the cytoplasmic membrane), and thus conserves the redox energy in a proton gradient. This chain is NAD(P)H-quinone oxidoreductase chain 4, found in Prochlorococcus marinus (strain NATL2A).